Consider the following 2193-residue polypeptide: Genome polyprotein (2193 aa).

The segment at 1 to 22 (MGSQVSTQRSGSHENSNSASEG) is disordered. Glycine 2 is lipidated: N-myristoyl glycine; by host. Residues 2 to 1503 (GSQVSTQRSG…HLNRAVLIMQ (1502 aa)) are Cytoplasmic-facing. Amphipathic alpha-helix regions lie at residues 566–588 (GDGI…LTSL) and 568–588 (GIAD…LTSL). Catalysis depends on for protease 2A activity residues histidine 883 and aspartate 901. 2 residues coordinate Zn(2+): cysteine 918 and cysteine 920. Cysteine 972 acts as the For protease 2A activity in catalysis. Positions 978 and 980 each coordinate Zn(2+). A membrane-binding region spans residues 1112–1184 (SASWLKKFND…EQSAASQEDL (73 aa)). The oligomerization stretch occupies residues 1112–1250 (SASWLKKFND…SPGTGKSLAT (139 aa)). The segment at 1133 to 1137 (SNKIS) is RNA-binding. The 159-residue stretch at 1216–1374 (EKRMNNYMQF…YKTDLGRLDA (159 aa)) folds into the SF3 helicase domain. 1240 to 1247 (GSPGTGKS) serves as a coordination point for ATP. Residues cysteine 1381, cysteine 1392, and cysteine 1397 each coordinate Zn(2+). A C4-type; degenerate zinc finger spans residues 1381–1397 (CSENNTANFKRCSPLVC). The RNA-binding stretch occupies residues 1424 to 1431 (EYNNRYAI). Residues 1435-1440 (IEALFQ) are oligomerization. Residues 1504-1519 (SIATVVAVVSLVYVIY) lie within the membrane without spanning it. The Cytoplasmic portion of the chain corresponds to 1520-2193 (KLFAGFQGAY…NLRRNWLELF (674 aa)). Tyrosine 1529 is modified (O-(5'-phospho-RNA)-tyrosine). In terms of domain architecture, Peptidase C3 spans 1549–1727 (GPSLDFALSL…FCAGLKRSYF (179 aa)). Residues histidine 1588, glutamate 1619, and cysteine 1695 each act as for protease 3C activity in the active site. Positions 1958–2073 (GSLFAFDYSG…ASYPFPIDCL (116 aa)) constitute a RdRp catalytic domain. Mg(2+) contacts are provided by aspartate 1964 and aspartate 2060.

The protein belongs to the picornaviruses polyprotein family. As to quaternary structure, interacts with capsid protein VP1 and capsid protein VP3 to form heterotrimeric protomers. Interacts with capsid protein VP0, and capsid protein VP3 to form heterotrimeric protomers. Five protomers subsequently associate to form pentamers which serve as building blocks for the capsid. Interacts with capsid protein VP2, capsid protein VP3 and capsid protein VP4 following cleavage of capsid protein VP0. In terms of assembly, interacts with capsid protein VP1 and capsid protein VP3 in the mature capsid. As to quaternary structure, interacts with capsid protein VP0 and capsid protein VP1 to form heterotrimeric protomers. Five protomers subsequently associate to form pentamers which serve as building blocks for the capsid. Interacts with capsid protein VP4 in the mature capsid. Interacts with protein 2C; this interaction may be important for virion morphogenesis. Interacts with capsid protein VP1 and capsid protein VP3. In terms of assembly, homodimer. As to quaternary structure, homohexamer; forms a hexameric ring structure with 6-fold symmetry characteristic of AAA+ ATPases. Interacts (via N-terminus) with host RTN3 (via reticulon domain); this interaction is important for viral replication. Interacts with capsid protein VP3; this interaction may be important for virion morphogenesis. Interacts with protein 3CD. In terms of assembly, homodimer. Interacts with host GBF1. Interacts (via GOLD domain) with host ACBD3 (via GOLD domain); this interaction allows the formation of a viral protein 3A/ACBD3 heterotetramer with a 2:2 stoichiometry, which will stimulate the recruitment of host PI4KB in order to synthesize PI4P at the viral RNA replication sites. As to quaternary structure, interacts with RNA-directed RNA polymerase. Interacts with host IFIH1/MDA5; this interaction inhibits host IFIH1. In terms of assembly, interacts with protein 3AB and with RNA-directed RNA polymerase. As to quaternary structure, interacts with Viral protein genome-linked and with protein 3CD. The cofactor is Mg(2+). In terms of processing, specific enzymatic cleavages in vivo by the viral proteases yield processing intermediates and the mature proteins. Post-translationally, myristoylation is required for the formation of pentamers during virus assembly. Further assembly of 12 pentamers and a molecule of genomic RNA generates the provirion. During virion maturation, immature virions are rendered infectious following cleavage of VP0 into VP4 and VP2. This maturation seems to be an autocatalytic event triggered by the presence of RNA in the capsid and it is followed by a conformational change infectious virion. In terms of processing, myristoylation is required during RNA encapsidation and formation of the mature virus particle. Post-translationally, VPg is uridylylated by the polymerase into VPg-pUpU. This acts as a nucleotide-peptide primer for the genomic RNA replication.

The protein resides in the virion. It is found in the host cytoplasm. The protein localises to the host cytoplasmic vesicle membrane. Its subcellular location is the host nucleus. The catalysed reaction is a ribonucleoside 5'-triphosphate + H2O = a ribonucleoside 5'-diphosphate + phosphate + H(+). It catalyses the reaction Selective cleavage of Tyr-|-Gly bond in the picornavirus polyprotein.. It carries out the reaction RNA(n) + a ribonucleoside 5'-triphosphate = RNA(n+1) + diphosphate. The enzyme catalyses Selective cleavage of Gln-|-Gly bond in the poliovirus polyprotein. In other picornavirus reactions Glu may be substituted for Gln, and Ser or Thr for Gly.. Replication or transcription is subject to high level of random mutations by the nucleotide analog ribavirin. In terms of biological role, forms an icosahedral capsid of pseudo T=3 symmetry with capsid proteins VP2 and VP3. The capsid is 300 Angstroms in diameter, composed of 60 copies of each capsid protein and enclosing the viral positive strand RNA genome. Capsid protein VP1 mainly forms the vertices of the capsid. Capsid protein VP1 interacts with host cell receptor to provide virion attachment to target host cells. This attachment induces virion internalization. After binding to its receptor, the capsid undergoes conformational changes. Capsid protein VP1 N-terminus (that contains an amphipathic alpha-helix) and capsid protein VP4 are externalized. Together, they shape a pore in the host membrane through which viral genome is translocated to host cell cytoplasm. Its function is as follows. Forms an icosahedral capsid of pseudo T=3 symmetry with capsid proteins VP2 and VP3. The capsid is 300 Angstroms in diameter, composed of 60 copies of each capsid protein and enclosing the viral positive strand RNA genome. Lies on the inner surface of the capsid shell. After binding to the host receptor, the capsid undergoes conformational changes. Capsid protein VP4 is released, Capsid protein VP1 N-terminus is externalized, and together, they shape a pore in the host membrane through which the viral genome is translocated into the host cell cytoplasm. Functionally, component of immature procapsids, which is cleaved into capsid proteins VP4 and VP2 after maturation. Allows the capsid to remain inactive before the maturation step. In terms of biological role, cysteine protease that cleaves viral polyprotein and specific host proteins. It is responsible for the autocatalytic cleavage between the P1 and P2 regions, which is the first cleavage occurring in the polyprotein. Also cleaves the host translation initiation factor EIF4G1, in order to shut down the capped cellular mRNA translation. Inhibits the host nucleus-cytoplasm protein and RNA trafficking by cleaving host members of the nuclear pores. Counteracts stress granule formation probably by antagonizing its assembly or promoting its dissassembly. Cleaves and inhibits host IFIH1/MDA5, thereby inhibiting the type-I IFN production and the establishment of the antiviral state. Cleaves and inhibits host MAVS, thereby inhibiting the type-I IFN production and the establishment of the antiviral state. Its function is as follows. Plays an essential role in the virus replication cycle by acting as a viroporin. Creates a pore in the host endoplasmic reticulum and as a consequence releases Ca2+ in the cytoplasm of infected cell. In turn, high levels of cytoplasmic calcium may trigger membrane trafficking and transport of viral ER-associated proteins to viroplasms, sites of viral genome replication. Induces and associates with structural rearrangements of intracellular membranes. Displays RNA-binding, nucleotide binding and NTPase activities. May play a role in virion morphogenesis and viral RNA encapsidation by interacting with the capsid protein VP3. Functionally, localizes the viral replication complex to the surface of membranous vesicles. Together with protein 3CD binds the Cis-Active RNA Element (CRE) which is involved in RNA synthesis initiation. Acts as a cofactor to stimulate the activity of 3D polymerase, maybe through a nucleid acid chaperone activity. In terms of biological role, localizes the viral replication complex to the surface of membranous vesicles. It inhibits host cell endoplasmic reticulum-to-Golgi apparatus transport and causes the disassembly of the Golgi complex, possibly through GBF1 interaction. This would result in depletion of MHC, trail receptors and IFN receptors at the host cell surface. Plays an essential role in viral RNA replication by recruiting ACBD3 and PI4KB at the viral replication sites, thereby allowing the formation of the rearranged membranous structures where viral replication takes place. Its function is as follows. Acts as a primer for viral RNA replication and remains covalently bound to viral genomic RNA. VPg is uridylylated prior to priming replication into VPg-pUpU. The oriI viral genomic sequence may act as a template for this. The VPg-pUpU is then used as primer on the genomic RNA poly(A) by the RNA-dependent RNA polymerase to replicate the viral genome. During genome replication, the VPg-RNA linkage is removed by the host TDP2, thereby accelerating replication. During the late stage of the replication cycle, host TDP2 is excluded from sites of viral RNA synthesis and encapsidation, allowing for the generation of progeny virions. Involved in the viral replication complex and viral polypeptide maturation. It exhibits protease activity with a specificity and catalytic efficiency that is different from protease 3C. Protein 3CD lacks polymerase activity. Protein 3CD binds to the 5'UTR of the viral genome. Functionally, major viral protease that mediates proteolytic processing of the polyprotein. Cleaves host EIF5B, contributing to host translation shutoff. Also cleaves host PABPC1, contributing to host translation shutoff. Binds and inhibits host IFIH1/MDA5, thereby inhibiting the type-I IFN production and the establishment of the antiviral state. Cleaves host MAP3K7/TAK1, resulting in inhibition of TRAF6-triggered NF-kappa-B induction. Cleaves host NLRP1, triggers host N-glycine-mediated degradation of the autoinhibitory NLRP1 N-terminal fragment. In terms of biological role, replicates the viral genomic RNA on the surface of intracellular membranes. May form linear arrays of subunits that propagate along a strong head-to-tail interaction called interface-I. Covalently attaches UMP to a tyrosine of VPg, which is used to prime RNA synthesis. The positive stranded RNA genome is first replicated at virus induced membranous vesicles, creating a dsRNA genomic replication form. This dsRNA is then used as template to synthesize positive stranded RNA genomes. ss(+)RNA genomes are either translated, replicated or encapsidated. This Homo sapiens (Human) protein is Genome polyprotein.